The following is a 347-amino-acid chain: Heat-inducible transcription repressor HrcA (347 aa).

The protein belongs to the HrcA family.

Its function is as follows. Negative regulator of class I heat shock genes (grpE-dnaK-dnaJ and groELS operons). Prevents heat-shock induction of these operons. In Mycoplasmopsis pulmonis (strain UAB CTIP) (Mycoplasma pulmonis), this protein is Heat-inducible transcription repressor HrcA.